A 438-amino-acid chain; its full sequence is 2-(3-amino-3-carboxypropyl)histidine synthase subunit 1 (438 aa).

The segment at 1–24 is disordered; that stretch reads MAALVVSETAEPGSRVGPGRGRIS. Cys-110, Cys-214, and Cys-342 together coordinate [4Fe-4S] cluster. The segment at 402–438 is disordered; that stretch reads LCQPASDKVQQGSRGGSPAPACESCNCADQKATSPAP. Ser-418 bears the Phosphoserine mark.

The protein belongs to the DPH1/DPH2 family. DPH1 subfamily. Component of the 2-(3-amino-3-carboxypropyl)histidine synthase complex composed of DPH1, DPH2, DPH3 and a NADH-dependent reductase. Interacts with DPH2. Interacts with RBM8A. It depends on [4Fe-4S] cluster as a cofactor. Strongly expressed in kidney and liver. Moderately expressed in brain, skin and testis. Weakly expressed in heart, lung, small intestine, spleen, stomach and thymus.

It is found in the nucleus. The protein resides in the cytoplasm. It catalyses the reaction L-histidyl-[translation elongation factor 2] + S-adenosyl-L-methionine = 2-[(3S)-amino-3-carboxypropyl]-L-histidyl-[translation elongation factor 2] + S-methyl-5'-thioadenosine + H(+). It functions in the pathway protein modification; peptidyl-diphthamide biosynthesis. Catalyzes the first step of diphthamide biosynthesis, a post-translational modification of histidine which occurs in elongation factor 2. DPH1 and DPH2 transfer a 3-amino-3-carboxypropyl (ACP) group from S-adenosyl-L-methionine (SAM) to a histidine residue, the reaction is assisted by a reduction system comprising DPH3 and a NADH-dependent reductase. Acts as a tumor suppressor. In Mus musculus (Mouse), this protein is 2-(3-amino-3-carboxypropyl)histidine synthase subunit 1.